A 372-amino-acid chain; its full sequence is Phospho-N-acetylmuramoyl-pentapeptide-transferase (372 aa).

10 consecutive transmembrane segments (helical) span residues Ser-21–Gly-41, Thr-71–Ala-91, Val-98–Leu-118, Tyr-134–Leu-154, Met-176–Ile-196, Gly-211–Ser-231, Val-251–His-271, Val-275–Met-295, Ile-300–Val-320, and Gln-349–Leu-369.

The protein belongs to the glycosyltransferase 4 family. MraY subfamily. It depends on Mg(2+) as a cofactor.

It is found in the cell inner membrane. The catalysed reaction is UDP-N-acetyl-alpha-D-muramoyl-L-alanyl-gamma-D-glutamyl-meso-2,6-diaminopimeloyl-D-alanyl-D-alanine + di-trans,octa-cis-undecaprenyl phosphate = di-trans,octa-cis-undecaprenyl diphospho-N-acetyl-alpha-D-muramoyl-L-alanyl-D-glutamyl-meso-2,6-diaminopimeloyl-D-alanyl-D-alanine + UMP. It participates in cell wall biogenesis; peptidoglycan biosynthesis. In terms of biological role, catalyzes the initial step of the lipid cycle reactions in the biosynthesis of the cell wall peptidoglycan: transfers peptidoglycan precursor phospho-MurNAc-pentapeptide from UDP-MurNAc-pentapeptide onto the lipid carrier undecaprenyl phosphate, yielding undecaprenyl-pyrophosphoryl-MurNAc-pentapeptide, known as lipid I. This Psychrobacter arcticus (strain DSM 17307 / VKM B-2377 / 273-4) protein is Phospho-N-acetylmuramoyl-pentapeptide-transferase.